We begin with the raw amino-acid sequence, 245 residues long: Nisin immunity protein (245 aa).

The N-terminal stretch at 1–19 (MRRYLILIVALIGITGLSG) is a signal peptide. Residue Cys-20 is the site of N-palmitoyl cysteine attachment. Cys-20 carries the S-diacylglycerol cysteine lipid modification.

The protein localises to the cell membrane. Functionally, involved in immunity against exogenously supplied nisin. In Lactococcus lactis subsp. lactis (Streptococcus lactis), this protein is Nisin immunity protein (nisI).